We begin with the raw amino-acid sequence, 279 residues long: Sulfur carrier protein FdhD (279 aa).

Cys112 serves as the catalytic Cysteine persulfide intermediate.

It belongs to the FdhD family.

The protein resides in the cytoplasm. Functionally, required for formate dehydrogenase (FDH) activity. Acts as a sulfur carrier protein that transfers sulfur from IscS to the molybdenum cofactor prior to its insertion into FDH. The protein is Sulfur carrier protein FdhD of Nocardia farcinica (strain IFM 10152).